A 222-amino-acid polypeptide reads, in one-letter code: Embryonic stem cell-related gene protein (222 aa).

In terms of tissue distribution, expressed only in fetal ovary and in undifferentiated ES cells.

The protein resides in the nucleus. The polypeptide is Embryonic stem cell-related gene protein (ESRG) (Homo sapiens (Human)).